The following is a 534-amino-acid chain: Glucan endo-1,3-beta-glucosidase 12 (534 aa).

The first 24 residues, 1 to 24, serve as a signal peptide directing secretion; the sequence is MGQRLNLVFWIFVSILAFLNFGMA. The active-site Proton donor is the Glu120. A glycan (N-linked (GlcNAc...) asparagine) is linked at Asn127. The Nucleophile role is filled by Glu264. 3 N-linked (GlcNAc...) asparagine glycosylation sites follow: Asn336, Asn357, and Asn375. Residues 348–379 are disordered; sequence ENTTPVSPTNSTTGTSPSPSSSPIINGNSTVT. Residues 349-377 are compositionally biased toward low complexity; sequence NTTPVSPTNSTTGTSPSPSSSPIINGNST. A disulfide bond links Cys392 and Cys455. N-linked (GlcNAc...) asparagine glycosylation is found at Asn485, Asn491, and Asn495. The GPI-anchor amidated serine moiety is linked to residue Ser507. A propeptide spans 508-534 (removed in mature form); it reads STNEAFRQMVVAVSVLLPCFVVCSSIW.

It belongs to the glycosyl hydrolase 17 family. Post-translationally, contains two additional disulfide bonds.

Its subcellular location is the secreted. The protein localises to the cell wall. The protein resides in the cell membrane. The enzyme catalyses Hydrolysis of (1-&gt;3)-beta-D-glucosidic linkages in (1-&gt;3)-beta-D-glucans.. The protein is Glucan endo-1,3-beta-glucosidase 12 of Arabidopsis thaliana (Mouse-ear cress).